Consider the following 306-residue polypeptide: UDP-N-acetylenolpyruvoylglucosamine reductase (306 aa).

The FAD-binding PCMH-type domain maps to 28–194 (KIGNISKLFL…LKTELNLKKE (167 aa)). The active-site Proton donor is S223. Residue E295 is part of the active site.

Belongs to the MurB family. FAD serves as cofactor.

The protein localises to the cytoplasm. It carries out the reaction UDP-N-acetyl-alpha-D-muramate + NADP(+) = UDP-N-acetyl-3-O-(1-carboxyvinyl)-alpha-D-glucosamine + NADPH + H(+). The protein operates within cell wall biogenesis; peptidoglycan biosynthesis. Functionally, cell wall formation. This chain is UDP-N-acetylenolpyruvoylglucosamine reductase, found in Borrelia garinii subsp. bavariensis (strain ATCC BAA-2496 / DSM 23469 / PBi) (Borreliella bavariensis).